Consider the following 156-residue polypeptide: Iron sulfur cluster assembly protein 2, mitochondrial (156 aa).

Residues 1-26 constitute a mitochondrion transit peptide; it reads MFARLANPAHFKPLTGSHITRAAKRL.

This sequence belongs to the NifU family. Component of the core Fe-S cluster (ISC) assembly machinery. Interacts with frataxin. Interacts with the mitochondrial co-chaperones JAC1 and SSQ1. Interacts with NFS1. Interacts with ferredoxin YAH1; interacts with the reduced form. It depends on [2Fe-2S] cluster as a cofactor.

It is found in the mitochondrion matrix. The protein operates within cofactor biosynthesis; iron-sulfur cluster biosynthesis. Scaffold protein for the de novo synthesis of iron-sulfur (Fe-S) clusters within mitochondria, which is required for maturation of both mitochondrial and cytoplasmic [2Fe-2S] and [4Fe-4S] proteins. First, a [2Fe-2S] cluster is transiently assembled on the scaffold proteins ISU1 and ISU2. In a second step, the cluster is released from ISU1/ISU2, transferred to glutaredoxin GRX5, followed by the formation of mitochondrial [2Fe-2S] proteins, the synthesis of [4Fe-4S] clusters and their target-specific insertion into the recipient apoproteins. Cluster assembly on ISU1/ISU2 depends on the function of the cysteine desulfurase complex NFS1-ISD11, which serves as the sulfur donor for cluster synthesis, the iron-binding protein frataxin (YFH1) as the putative iron donor, and the electron transfer chain comprised of ferredoxin reductase ARH1 and ferredoxin YAH1, which receive their electrons from NADH. Fe-S cluster release from ISU1/ISU2 is achieved by interaction with the Hsp70 chaperone SSQ1, assisted by the DnaJ-like co-chaperone JAC1 and the nucleotide exchange factor MGE1. ISU1 is the major isoform in yeast, while ISU2 is not detectable in cells grown to stationary phase. Also involved in production of a sulfur precursor required for thiolation of cytoplasmic tRNAs. The polypeptide is Iron sulfur cluster assembly protein 2, mitochondrial (Saccharomyces cerevisiae (strain ATCC 204508 / S288c) (Baker's yeast)).